The following is a 136-amino-acid chain: ATP synthase F(0) complex subunit C1, mitochondrial (136 aa).

The transit peptide at 1–61 directs the protein to the mitochondrion; sequence MQTTGALLIS…REFQTSVVSR (61 aa). The chain crosses the membrane as a helical span at residues 77–97; that stretch reads VGVAGSGAGIGTVFGSLIIGY. Residue K104 is modified to N6,N6,N6-trimethyllysine. Residues 112-132 traverse the membrane as a helical segment; that stretch reads ILGFALFEAMGLFCLMVAFLI.

It belongs to the ATPase C chain family. In terms of assembly, homooctamer; the c-ring consists of eight c subunits forming a circle, and each subunit adopts a hairpin shape. Component of the ATP synthase complex composed at least of ATP5F1A/subunit alpha, ATP5F1B/subunit beta, ATP5MC1/subunit c (homooctomer), MT-ATP6/subunit a, MT-ATP8/subunit 8, ATP5ME/subunit e, ATP5MF/subunit f, ATP5MG/subunit g, ATP5MK/subunit k, ATP5MJ/subunit j, ATP5F1C/subunit gamma, ATP5F1D/subunit delta, ATP5F1E/subunit epsilon, ATP5PF/subunit F6, ATP5PB/subunit b, ATP5PD/subunit d, ATP5PO/subunit OSCP. ATP synthase complex consists of a soluble F(1) head domain (subunits alpha(3) and beta(3)) - the catalytic core - and a membrane F(0) domain - the membrane proton channel (subunits c, a, 8, e, f, g, k and j). These two domains are linked by a central stalk (subunits gamma, delta, and epsilon) rotating inside the F1 region and a stationary peripheral stalk (subunits F6, b, d, and OSCP). Interacts with TMEM70 (homooligomer form); this interaction facilitates the oligomer formation of subunit c/ATP5MC1 (c-ring) and the c-ring membrane insertion and also protects ATP5MC1 against intramitochondrial proteolysis. Trimethylated by ATPSCKMT at Lys-104. Methylation is required for proper incorporation of the C subunit into the ATP synthase complex and mitochondrial respiration.

The protein localises to the mitochondrion membrane. It carries out the reaction H(+)(in) = H(+)(out). Subunit c, of the mitochondrial membrane ATP synthase complex (F(1)F(0) ATP synthase or Complex V) that produces ATP from ADP in the presence of a proton gradient across the membrane which is generated by electron transport complexes of the respiratory chain. ATP synthase complex consist of a soluble F(1) head domain - the catalytic core - and a membrane F(1) domain - the membrane proton channel. These two domains are linked by a central stalk rotating inside the F(1) region and a stationary peripheral stalk. During catalysis, ATP synthesis in the catalytic domain of F(1) is coupled via a rotary mechanism of the central stalk subunits to proton translocation. With the subunit a (MT-ATP6), forms the proton-conducting channel in the F(0) domain, that contains two crucial half-channels (inlet and outlet) that facilitate proton movement from the mitochondrial intermembrane space (IMS) into the matrix. Protons are taken up via the inlet half-channel and released through the outlet half-channel, following a Grotthuss mechanism. The chain is ATP synthase F(0) complex subunit C1, mitochondrial from Sus scrofa (Pig).